The sequence spans 199 residues: Transcription regulator complex subunit bur6 (199 aa).

Residues 106-199 (PPIKAERKTK…SEASSASGDE (94 aa)) are disordered. A compositionally biased stretch (basic residues) spans 112–121 (RKTKRPRARR). Over residues 185 to 199 (SDKTTSEASSASGDE) the composition is skewed to polar residues.

This sequence belongs to the NC2 alpha/DRAP1 family.

It is found in the nucleus. In terms of biological role, transcription regulator complex subunit that is essential for cell cycle progression. This is Transcription regulator complex subunit bur6 from Schizosaccharomyces pombe (strain 972 / ATCC 24843) (Fission yeast).